Reading from the N-terminus, the 261-residue chain is Imidazole glycerol phosphate synthase subunit HisF (261 aa).

Residues D16 and D135 contribute to the active site.

It belongs to the HisA/HisF family. In terms of assembly, heterodimer of HisH and HisF.

It localises to the cytoplasm. The enzyme catalyses 5-[(5-phospho-1-deoxy-D-ribulos-1-ylimino)methylamino]-1-(5-phospho-beta-D-ribosyl)imidazole-4-carboxamide + L-glutamine = D-erythro-1-(imidazol-4-yl)glycerol 3-phosphate + 5-amino-1-(5-phospho-beta-D-ribosyl)imidazole-4-carboxamide + L-glutamate + H(+). It functions in the pathway amino-acid biosynthesis; L-histidine biosynthesis; L-histidine from 5-phospho-alpha-D-ribose 1-diphosphate: step 5/9. Its function is as follows. IGPS catalyzes the conversion of PRFAR and glutamine to IGP, AICAR and glutamate. The HisF subunit catalyzes the cyclization activity that produces IGP and AICAR from PRFAR using the ammonia provided by the HisH subunit. This Mycobacterium ulcerans (strain Agy99) protein is Imidazole glycerol phosphate synthase subunit HisF.